Consider the following 312-residue polypeptide: Bifunctional pinoresinol-lariciresinol reductase (312 aa).

Residues 10–16, Arg-35, and Lys-44 each bind NADP(+); that span reads GGTGYIG. Lys-136 acts as the Proton acceptor in catalysis. Arg-140 provides a ligand contact to NADP(+). His-268 contacts substrate.

Belongs to the NmrA-type oxidoreductase family. Isoflavone reductase subfamily. In terms of assembly, dimer. As to expression, expressed in seed coats, but not in embryos, leaves, stems and roots.

Its function is as follows. Reductase involved in lignan biosynthesis. Catalyzes the sequential conversion of pinoresinol into lariciresinol and of lariciresinol into secoisolariciresinol. Abstracts the 4R-hydride from the NADPH cofactor during catalysis. The sequence is that of Bifunctional pinoresinol-lariciresinol reductase from Linum usitatissimum (Flax).